The sequence spans 517 residues: 2-isopropylmalate synthase (517 aa).

The 262-residue stretch at 6-267 (IIVFDTTLRD…YTTINTPEIY (262 aa)) folds into the Pyruvate carboxyltransferase domain. The Mn(2+) site is built by Asp-15, His-201, His-203, and Asn-237. The regulatory domain stretch occupies residues 393–517 (DLIGLQISDC…RLSKSSEHQV (125 aa)).

It belongs to the alpha-IPM synthase/homocitrate synthase family. LeuA type 1 subfamily. Homodimer. Mn(2+) serves as cofactor.

It is found in the cytoplasm. The enzyme catalyses 3-methyl-2-oxobutanoate + acetyl-CoA + H2O = (2S)-2-isopropylmalate + CoA + H(+). Its pathway is amino-acid biosynthesis; L-leucine biosynthesis; L-leucine from 3-methyl-2-oxobutanoate: step 1/4. In terms of biological role, catalyzes the condensation of the acetyl group of acetyl-CoA with 3-methyl-2-oxobutanoate (2-ketoisovalerate) to form 3-carboxy-3-hydroxy-4-methylpentanoate (2-isopropylmalate). The chain is 2-isopropylmalate synthase from Aliarcobacter butzleri (strain RM4018) (Arcobacter butzleri).